The primary structure comprises 479 residues: Odorant receptor coreceptor (479 aa).

Residues 1–43 (MHVQPTKYHGLVLDLMPNIRLMQGFGHFLFRYVSGPVLIRKLY) are Cytoplasmic-facing. The helical transmembrane segment at 44–64 (SWWNLIMILLQYFAIMGNLVM) threads the bilayer. Topologically, residues 65–73 (NTGDVNELT) are extracellular. Residues 74–94 (ANTITTLFFTHSVTKFIYVAV) form a helical membrane-spanning segment. Topologically, residues 95–133 (NSEHFYRTLGIWNQPNSHSLFAESDARYHSIALAKMRKL) are cytoplasmic. Residues 134-154 (LVMVMVTTVLSVVAWITITFF) traverse the membrane as a helical segment. Over 155 to 187 (GDSVKNVFDKETNETYTVEIPRLPIKALYPWDA) the chain is Extracellular. Asn167 carries N-linked (GlcNAc...) asparagine glycosylation. A helical transmembrane segment spans residues 188 to 208 (MSGVPYFFSFVYQAYFLLFSM). Residues 209 to 344 (CQANLADVMF…VERHKHVVRL (136 aa)) are Cytoplasmic-facing. The helical transmembrane segment at 345–365 (VSAIGETYGAALLLHMLTSTI) threads the bilayer. Topologically, residues 366–383 (KLTLLAYQATKIDALNVY) are extracellular. A helical transmembrane segment spans residues 384–404 (GLTVIGYLVYALAQVFLFCIF). Residues 405–455 (GNRLIEESSSVMEAAYSCHWYDGSEEAKTFVQIVCQQCQKAMTISGAKFFT) are Cytoplasmic-facing. Residues 456–476 (VSLDLFASVLGAVVTYFMVLV) traverse the membrane as a helical segment. The Extracellular segment spans residues 477-479 (QLK).

The protein belongs to the insect chemoreceptor superfamily. Heteromeric odorant receptor channel (TC 1.A.69) family. Orco subfamily. As to quaternary structure, heterodimer with conventional odorant receptors (ORs). As to expression, expressed in female antenna, maxillary palp and proboscis. Not detected in male tissues.

It localises to the cell membrane. Functionally, odorant coreceptor which complexes with conventional odorant receptors (ORs) to form odorant-sensing units, providing sensitive and prolonged odorant signaling and calcium permeability. Orco is a universal and integral part of the functional odorant receptor, involved in the dendritic localization of other olfactory receptors. Required for detecting a host for blood feeding. Plays a key role in preferred attraction of females for humans over non-human hosts for blood feeding. This Aedes albopictus (Asian tiger mosquito) protein is Odorant receptor coreceptor.